The primary structure comprises 251 residues: Probable transcriptional regulatory protein cbdbA400 (251 aa).

This sequence belongs to the TACO1 family.

It is found in the cytoplasm. In Dehalococcoides mccartyi (strain CBDB1), this protein is Probable transcriptional regulatory protein cbdbA400.